The chain runs to 118 residues: Small ribosomal subunit protein uS13 (118 aa).

A disordered region spans residues 97 to 118 (VRGQRTKTNARTCKGPRKAIKK).

Belongs to the universal ribosomal protein uS13 family. In terms of assembly, part of the 30S ribosomal subunit. Forms a loose heterodimer with protein S19. Forms two bridges to the 50S subunit in the 70S ribosome.

Its function is as follows. Located at the top of the head of the 30S subunit, it contacts several helices of the 16S rRNA. In the 70S ribosome it contacts the 23S rRNA (bridge B1a) and protein L5 of the 50S subunit (bridge B1b), connecting the 2 subunits; these bridges are implicated in subunit movement. Contacts the tRNAs in the A and P-sites. The chain is Small ribosomal subunit protein uS13 from Buchnera aphidicola subsp. Schizaphis graminum (strain Sg).